A 428-amino-acid polypeptide reads, in one-letter code: Enolase (428 aa).

Residue Gln163 participates in (2R)-2-phosphoglycerate binding. Glu205 (proton donor) is an active-site residue. Residues Asp242, Glu286, and Asp313 each contribute to the Mg(2+) site. Lys338, Arg367, Ser368, and Lys389 together coordinate (2R)-2-phosphoglycerate. Lys338 (proton acceptor) is an active-site residue.

Belongs to the enolase family. Mg(2+) serves as cofactor.

It is found in the cytoplasm. The protein resides in the secreted. Its subcellular location is the cell surface. The enzyme catalyses (2R)-2-phosphoglycerate = phosphoenolpyruvate + H2O. It participates in carbohydrate degradation; glycolysis; pyruvate from D-glyceraldehyde 3-phosphate: step 4/5. Functionally, catalyzes the reversible conversion of 2-phosphoglycerate (2-PG) into phosphoenolpyruvate (PEP). It is essential for the degradation of carbohydrates via glycolysis. The polypeptide is Enolase (Lactobacillus acidophilus (strain ATCC 700396 / NCK56 / N2 / NCFM)).